The following is a 208-amino-acid chain: Ubiquitin-conjugating enzyme E2 S (208 aa).

In terms of domain architecture, UBC core spans Gln-14–Gln-160. Cys-98 acts as the Glycyl thioester intermediate in catalysis. The tract at residues Ala-159–Leu-208 is disordered. The span at Asp-170–Leu-198 shows a compositional bias: basic and acidic residues. A compositionally biased stretch (basic residues) spans Lys-199–Leu-208.

This sequence belongs to the ubiquitin-conjugating enzyme family.

It carries out the reaction S-ubiquitinyl-[E1 ubiquitin-activating enzyme]-L-cysteine + [E2 ubiquitin-conjugating enzyme]-L-cysteine = [E1 ubiquitin-activating enzyme]-L-cysteine + S-ubiquitinyl-[E2 ubiquitin-conjugating enzyme]-L-cysteine.. The protein operates within protein modification; protein ubiquitination. Functionally, catalyzes the covalent attachment of ubiquitin to other proteins. Acts as an essential factor of the anaphase promoting complex/cyclosome (APC/C), a cell cycle-regulated ubiquitin ligase that controls progression through mitosis. Acts by specifically elongating polyubiquitin chains initiated by the E2 enzyme vih/UbcH10 on APC/C substrates, enhancing the degradation of APC/C substrates by the proteasome and promoting mitotic exit. In Drosophila willistoni (Fruit fly), this protein is Ubiquitin-conjugating enzyme E2 S.